A 62-amino-acid chain; its full sequence is Large ribosomal subunit protein bL28 (62 aa).

It belongs to the bacterial ribosomal protein bL28 family.

The sequence is that of Large ribosomal subunit protein bL28 from Streptococcus gordonii (strain Challis / ATCC 35105 / BCRC 15272 / CH1 / DL1 / V288).